The sequence spans 110 residues: Putative pterin-4-alpha-carbinolamine dehydratase (110 aa).

It belongs to the pterin-4-alpha-carbinolamine dehydratase family.

The catalysed reaction is (4aS,6R)-4a-hydroxy-L-erythro-5,6,7,8-tetrahydrobiopterin = (6R)-L-erythro-6,7-dihydrobiopterin + H2O. This Vibrio vulnificus (strain CMCP6) protein is Putative pterin-4-alpha-carbinolamine dehydratase.